Consider the following 245-residue polypeptide: 8-amino-3,8-dideoxy-manno-octulosonate cytidylyltransferase (245 aa).

It belongs to the KdsB family.

Its subcellular location is the cytoplasm. It carries out the reaction 8-amino-3,8-dideoxy-alpha-D-manno-octulosonate + CTP = CMP-8-amino-3,8-dideoxy-alpha-D-manno-oct-2-ulosonate + diphosphate. The protein operates within bacterial outer membrane biogenesis; lipopolysaccharide biosynthesis. In terms of biological role, activates KDO8N (a required 8-carbon sugar) for incorporation into bacterial lipopolysaccharide in the Shewanella genus. The protein is 8-amino-3,8-dideoxy-manno-octulosonate cytidylyltransferase of Shewanella sediminis (strain HAW-EB3).